The chain runs to 611 residues: Dehydrogenase pkfF (611 aa).

The signal sequence occupies residues 1–19 (MRHTALLPLVSSFIVPALA). N-linked (GlcNAc...) asparagine glycans are attached at residues Asn28 and Asn38. Residues 50–51 (TS), 71–72 (EA), and 137–140 (HYMV) each bind FAD. Residues Asn180, Asn187, Asn240, Asn272, Asn409, and Asn471 are each glycosylated (N-linked (GlcNAc...) asparagine). His547 functions as the Proton acceptor in the catalytic mechanism. FAD-binding positions include Ala581 and 592–593 (PQ).

The protein belongs to the GMC oxidoreductase family. It depends on FAD as a cofactor.

It participates in secondary metabolite biosynthesis. Dehydrogenase; part of the gene cluster that mediates the biosynthesis of aspernidine A, a prenylated isoindolinone. The starting point of the biosynthesis of aspernidin A is the production of orsellinaldehyde by the non-reducing polyketide synthase pkfA. Hydroxylation, methylation of one of the phenol groups, and prenylation, presumably catalyzed by the prenyltransferase pkfE, would be needed to yield aspernidine D. Subsequently, the cytochrome P450 monooxygenase pkfB is responsible for hydroxylation of aspernidine D to yield aspernidine E. The dehydrogenase pkfF may be responsible for further oxidation of aspernidine E to form a dialdehyde intermediate which is further transformed in a series of steps, some of which are enzyme-mediated, to generate aspernidine A. The possibility that additional enzymes outside of the cluster are involved in aspernidine A biosynthesis cannot be excluded. In Emericella nidulans (strain FGSC A4 / ATCC 38163 / CBS 112.46 / NRRL 194 / M139) (Aspergillus nidulans), this protein is Dehydrogenase pkfF.